A 338-amino-acid polypeptide reads, in one-letter code: Uroporphyrinogen decarboxylase (338 aa).

Substrate is bound by residues 27–31, D77, Y151, S203, and H317; that span reads RQAGR.

It belongs to the uroporphyrinogen decarboxylase family. Homodimer.

Its subcellular location is the cytoplasm. It carries out the reaction uroporphyrinogen III + 4 H(+) = coproporphyrinogen III + 4 CO2. The protein operates within porphyrin-containing compound metabolism; protoporphyrin-IX biosynthesis; coproporphyrinogen-III from 5-aminolevulinate: step 4/4. Catalyzes the decarboxylation of four acetate groups of uroporphyrinogen-III to yield coproporphyrinogen-III. This Wolbachia sp. subsp. Drosophila simulans (strain wRi) protein is Uroporphyrinogen decarboxylase.